The primary structure comprises 514 residues: Sugar transport protein 10 (514 aa).

Topologically, residues 1-18 (MAGGAFVSEGGGGGRSYE) are cytoplasmic. A run of 10 helical transmembrane segments spans residues 19–39 (GGVTAFVIMTCIVAAMGGLLF), 86–106 (LFTSSLYLAALVASFMASVIT), 113–133 (VSMFIGGLAFLIGALFNAFAV), 135–155 (VSMLIIGRLLLGVGVGFANQS), 170–190 (GALNIGFQMAITIGILVANLI), 204–224 (VSLGLAAVPAVVMVIGSFILP), 285–305 (LIFCSAIPFFQQITGINVIMF), 320–340 (AALMSAVITGVVNMLSTFVSI), 350–370 (LLFLEGGIQMFICQLLVGSFI), and 389–409 (WILAFICVYVAGFAWSWGPLG). Cysteine 77 and cysteine 449 are joined by a disulfide. Residue glutamine 177 participates in beta-D-glucose binding. 4 residues coordinate beta-D-glucose: glutamine 295, glutamine 296, asparagine 301, and asparagine 332. Tryptophan 410 is a binding site for beta-D-glucose. 2 helical membrane passes run 428–448 (INVSVNMFFTFLIGQFFLTML) and 453–473 (FGLFYFFASMVAIMTVFIYFL). The Cytoplasmic portion of the chain corresponds to 474–514 (LPETKGVPIEEMGRVWKQHWFWKKYIPEDAIIGGHDDNNTN).

The protein belongs to the major facilitator superfamily. Sugar transporter (TC 2.A.1.1) family. Expressed in primordia of lateral roots, pollinated stigmata, and pollen tubes.

Its subcellular location is the membrane. It catalyses the reaction D-glucose(out) + H(+)(out) = D-glucose(in) + H(+)(in). The enzyme catalyses D-mannose(out) + H(+)(out) = D-mannose(in) + H(+)(in). It carries out the reaction D-galactose(in) + H(+)(in) = D-galactose(out) + H(+)(out). In terms of biological role, hexose-H(+) symporter that catalyzes the high-affinity uptake of glucose, galactose and mannose. Proton-coupled symporter responsible for the uptake of glucose from the apoplast into the cells. This Arabidopsis thaliana (Mouse-ear cress) protein is Sugar transport protein 10.